A 289-amino-acid chain; its full sequence is Probable WRKY transcription factor 38 (289 aa).

Residues 62-103 (PETEDDQFSDLSSRDSSPPPQGSPSKKRKIDSTNSSENWRDD) form a disordered region. The segment at residues 104–172 (SPDPIYYDGY…YFGHHTCKTE (69 aa)) is a DNA-binding region (WRKY). Residues 249-266 (LSSPSGSYPPSSSSGSES) show a composition bias toward low complexity. Residues 249-278 (LSSPSGSYPPSSSSGSESADFNSDLLFDNP) form a disordered region.

It belongs to the WRKY group III family.

It localises to the nucleus. Transcription factor. Interacts specifically with the W box (5'-(T)TGAC[CT]-3'), a frequently occurring elicitor-responsive cis-acting element. This Arabidopsis thaliana (Mouse-ear cress) protein is Probable WRKY transcription factor 38 (WRKY38).